Reading from the N-terminus, the 510-residue chain is Major facilitator superfamily domain-containing protein 8 (510 aa).

Topologically, residues Met-1 to Arg-38 are cytoplasmic. The Dileucine internalization motif motif lies at Leu-14–Leu-15. Residues Val-39–Trp-59 traverse the membrane as a helical segment. Topologically, residues Pro-60–Ser-72 are extracellular. Residues Phe-73–Gly-93 traverse the membrane as a helical segment. Topologically, residues Leu-94–Glu-103 are cytoplasmic. A helical transmembrane segment spans residues Pro-104–Val-124. The Extracellular portion of the chain corresponds to Pro-125–Tyr-132. The helical transmembrane segment at Met-133–Ala-155 threads the bilayer. Over Gly-156 to Ser-171 the chain is Cytoplasmic. A helical membrane pass occupies residues Ala-172–Gly-192. At Glu-193–Thr-209 the chain is on the extracellular side. Residues Ala-210–Phe-230 form a helical membrane-spanning segment. The Cytoplasmic segment spans residues Arg-231–Gln-264. A helical membrane pass occupies residues Ile-265–Glu-285. Over Thr-286–Gln-302 the chain is Extracellular. The helical transmembrane segment at Ala-303–Leu-323 threads the bilayer. At Thr-324–Arg-335 the chain is on the cytoplasmic side. Residues Val-336–Gly-356 traverse the membrane as a helical segment. The Extracellular portion of the chain corresponds to Asn-357–Pro-406. 2 N-linked (GlcNAc...) asparagine glycosylation sites follow: Asn-369 and Asn-374. A helical membrane pass occupies residues Val-407–Cys-427. Residues Asn-428 to Gly-445 lie on the Cytoplasmic side of the membrane. Residues Leu-446–Val-466 form a helical membrane-spanning segment. Residues Ser-467 to Arg-476 are Extracellular-facing. The helical transmembrane segment at Trp-477–Tyr-497 threads the bilayer. Residues Lys-498–Leu-510 lie on the Cytoplasmic side of the membrane.

This sequence belongs to the major facilitator superfamily.

It localises to the lysosome membrane. Its function is as follows. May be a carrier that transport small solutes by using chemiosmotic ion gradients. The protein is Major facilitator superfamily domain-containing protein 8 (mfsd8) of Xenopus laevis (African clawed frog).